The sequence spans 297 residues: Mitochondrial ornithine transporter 1 (297 aa).

Solcar repeat units lie at residues 15 to 97 (GSPA…LKLT), 102 to 205 (DPTL…FKKN), and 212 to 292 (KPHF…FRET). The next 6 helical transmembrane spans lie at 18 to 38 (ASTFSAALVSSAISNVIGYPL), 72 to 91 (GLTLPLISATLSRSVSFTVY), 107 to 127 (YFISGLGTGTFISLFACPFEY), 184 to 204 (HLTRDALGSACYFTIYETFKK), 215 to 235 (FAYAFSGAFCGALSWILVFPV), and 264 to 285 (IYRGIGISLMRSALINSCNFTL).

This sequence belongs to the mitochondrial carrier (TC 2.A.29) family.

The protein localises to the mitochondrion inner membrane. Required for arginine biosynthesis. Transports ornithine synthesized from glutamate in the mitochondrial matrix to the cytosol, where it is converted to arginine. In Schizosaccharomyces pombe (strain 972 / ATCC 24843) (Fission yeast), this protein is Mitochondrial ornithine transporter 1.